Here is a 227-residue protein sequence, read N- to C-terminus: Large ribosomal subunit protein uL3 (227 aa).

The interval 146-167 (RGPMAHGSKFHRHQGSNGACSS) is disordered.

The protein belongs to the universal ribosomal protein uL3 family. In terms of assembly, part of the 50S ribosomal subunit. Forms a cluster with proteins L14 and L19.

One of the primary rRNA binding proteins, it binds directly near the 3'-end of the 23S rRNA, where it nucleates assembly of the 50S subunit. The polypeptide is Large ribosomal subunit protein uL3 (Agathobacter rectalis (strain ATCC 33656 / DSM 3377 / JCM 17463 / KCTC 5835 / VPI 0990) (Eubacterium rectale)).